The primary structure comprises 374 residues: MADKDLYAILGVCRTANQDEIKKAYRKLSMKWHPDRNPNNKEEAEEKFKEINKAYEILSDSQKRASYDRFGFDAANQGAAGGGFSGGNFSDIFGDVFGDIFGNVRQTNGARQTRGHDLAYKIELSLEEAIHGVEKQIRIATQVRCGECHGSGMNAKSKKKTCPTCNGAGQVRMQQGFFSIAQPCPTCHGRGEIIENPCNKCQGTGRVKDTRVLTVNIPAGVDNGDRIRLSGEGEAGELGAPAGDLYIEIFVRAHPIFERQGNDLYCKMPISFTTACLGGDLEVPTLNGRVKLSIPEETQTGKTFRLKGKGVQSVRSNSVGDLYCTVTIETPINLSKAQKELLMNFEQALNEGGKTHTPQAKGFFDNIKQFFDNL.

A J domain is found at 5–71 (DLYAILGVCR…QKRASYDRFG (67 aa)). The CR-type zinc finger occupies 132–210 (GVEKQIRIAT…CQGTGRVKDT (79 aa)). Positions 145, 148, 162, 165, 184, 187, 198, and 201 each coordinate Zn(2+). 4 CXXCXGXG motif repeats span residues 145–152 (CGECHGSG), 162–169 (CPTCNGAG), 184–191 (CPTCHGRG), and 198–205 (CNKCQGTG).

The protein belongs to the DnaJ family. In terms of assembly, homodimer. Zn(2+) serves as cofactor.

Its subcellular location is the cytoplasm. Participates actively in the response to hyperosmotic and heat shock by preventing the aggregation of stress-denatured proteins and by disaggregating proteins, also in an autonomous, DnaK-independent fashion. Unfolded proteins bind initially to DnaJ; upon interaction with the DnaJ-bound protein, DnaK hydrolyzes its bound ATP, resulting in the formation of a stable complex. GrpE releases ADP from DnaK; ATP binding to DnaK triggers the release of the substrate protein, thus completing the reaction cycle. Several rounds of ATP-dependent interactions between DnaJ, DnaK and GrpE are required for fully efficient folding. Also involved, together with DnaK and GrpE, in the DNA replication of plasmids through activation of initiation proteins. This Dichelobacter nodosus (strain VCS1703A) protein is Chaperone protein DnaJ.